Reading from the N-terminus, the 274-residue chain is Thiazole synthase (274 aa).

Lys111 (schiff-base intermediate with DXP) is an active-site residue. 1-deoxy-D-xylulose 5-phosphate is bound by residues Gly172, 198 to 199, and 220 to 221; these read AG and NS. Residues 251 to 274 are disordered; it reads RLPERAAASPSSPTTGIIAEAKTK.

This sequence belongs to the ThiG family. In terms of assembly, homotetramer. Forms heterodimers with either ThiH or ThiS.

Its subcellular location is the cytoplasm. It carries out the reaction [ThiS sulfur-carrier protein]-C-terminal-Gly-aminoethanethioate + 2-iminoacetate + 1-deoxy-D-xylulose 5-phosphate = [ThiS sulfur-carrier protein]-C-terminal Gly-Gly + 2-[(2R,5Z)-2-carboxy-4-methylthiazol-5(2H)-ylidene]ethyl phosphate + 2 H2O + H(+). Its pathway is cofactor biosynthesis; thiamine diphosphate biosynthesis. Functionally, catalyzes the rearrangement of 1-deoxy-D-xylulose 5-phosphate (DXP) to produce the thiazole phosphate moiety of thiamine. Sulfur is provided by the thiocarboxylate moiety of the carrier protein ThiS. In vitro, sulfur can be provided by H(2)S. This chain is Thiazole synthase, found in Prochlorococcus marinus (strain MIT 9313).